A 520-amino-acid polypeptide reads, in one-letter code: Putative hydrolase Mb2247c (520 aa).

The N-terminal stretch at 1–34 (MAAMWRRRPLSSALLSFGLLLGGLPLAAPPLAGA) is a signal peptide. The chain crosses the membrane as a helical span at residues 104–124 (FGALLVNPGGPGASAVDMVAA). In terms of domain architecture, AB hydrolase-1 spans 105 to 403 (GALLVNPGGP…APTPADPAAW (299 aa)). S232 serves as the catalytic Nucleophile. Residue D461 is part of the active site. H488 serves as the catalytic Proton donor.

Belongs to the peptidase S33 family.

It is found in the cell membrane. This Mycobacterium bovis (strain ATCC BAA-935 / AF2122/97) protein is Putative hydrolase Mb2247c.